The following is a 201-amino-acid chain: Recombination protein RecR (201 aa).

Residues 60–75 (CSCCGNVDTSDPCTIC) form a C4-type zinc finger. Positions 83-178 (TTLIVVEDVS…RVTRLAHGVP (96 aa)) constitute a Toprim domain.

This sequence belongs to the RecR family.

May play a role in DNA repair. It seems to be involved in an RecBC-independent recombinational process of DNA repair. It may act with RecF and RecO. This Brucella anthropi (strain ATCC 49188 / DSM 6882 / CCUG 24695 / JCM 21032 / LMG 3331 / NBRC 15819 / NCTC 12168 / Alc 37) (Ochrobactrum anthropi) protein is Recombination protein RecR.